The chain runs to 217 residues: 2-C-methyl-D-erythritol 4-phosphate cytidylyltransferase (217 aa).

Belongs to the IspD/TarI cytidylyltransferase family. IspD subfamily.

The catalysed reaction is 2-C-methyl-D-erythritol 4-phosphate + CTP + H(+) = 4-CDP-2-C-methyl-D-erythritol + diphosphate. It functions in the pathway isoprenoid biosynthesis; isopentenyl diphosphate biosynthesis via DXP pathway; isopentenyl diphosphate from 1-deoxy-D-xylulose 5-phosphate: step 2/6. In terms of biological role, catalyzes the formation of 4-diphosphocytidyl-2-C-methyl-D-erythritol from CTP and 2-C-methyl-D-erythritol 4-phosphate (MEP). This Chlamydia abortus (strain DSM 27085 / S26/3) (Chlamydophila abortus) protein is 2-C-methyl-D-erythritol 4-phosphate cytidylyltransferase.